The chain runs to 105 residues: Heat shock protein HspQ (105 aa).

Positions Ser-74–Asn-105 are disordered. Residues Arg-95–Asn-105 are compositionally biased toward basic residues.

It belongs to the HspQ family.

Its subcellular location is the cytoplasm. Involved in the degradation of certain denaturated proteins, including DnaA, during heat shock stress. This Shigella dysenteriae serotype 1 (strain Sd197) protein is Heat shock protein HspQ.